The chain runs to 365 residues: Flagellar P-ring protein (365 aa).

The first 19 residues, 1-19, serve as a signal peptide directing secretion; it reads MMLSLCAIAGLLLAPSIQA.

It belongs to the FlgI family. In terms of assembly, the basal body constitutes a major portion of the flagellar organelle and consists of four rings (L,P,S, and M) mounted on a central rod.

It is found in the periplasm. It localises to the bacterial flagellum basal body. Functionally, assembles around the rod to form the L-ring and probably protects the motor/basal body from shearing forces during rotation. This Sodalis glossinidius (strain morsitans) protein is Flagellar P-ring protein.